A 135-amino-acid polypeptide reads, in one-letter code: Large ribosomal subunit protein eL32 (135 aa).

Belongs to the eukaryotic ribosomal protein eL32 family.

In Methanococcus vannielii, this protein is Large ribosomal subunit protein eL32 (rpl32e).